We begin with the raw amino-acid sequence, 416 residues long: Probable tRNA pseudouridine synthase D (416 aa).

Asp-83 (nucleophile) is an active-site residue. One can recognise a TRUD domain in the interval 158–379 (GFPNYFGYQR…PGGRRELLIR (222 aa)).

Belongs to the pseudouridine synthase TruD family.

The catalysed reaction is uridine(13) in tRNA = pseudouridine(13) in tRNA. Could be responsible for synthesis of pseudouridine from uracil-13 in transfer RNAs. This is Probable tRNA pseudouridine synthase D from Thermococcus onnurineus (strain NA1).